We begin with the raw amino-acid sequence, 155 residues long: Ciliary microtubule inner protein 2C (155 aa).

Belongs to the CIMIP2 family.

It localises to the cytoplasm. It is found in the cytoskeleton. The protein resides in the cilium axoneme. Functionally, microtubule inner protein (MIP) part of the dynein-decorated doublet microtubules (DMTs) in cilia axoneme, which is required for motile cilia beating. The chain is Ciliary microtubule inner protein 2C (cimip2c) from Xenopus tropicalis (Western clawed frog).